Reading from the N-terminus, the 634-residue chain is MSNSNIDNDLDKIDSLLKKAKSKKIPVTYDDINNALPLNKNPSIRQLEEAILKFSDAGVDILESNEDDEIKLDIGMDEEFKLSTNVDNEPEDEVEEENIGTTDDPVRLYLKDMGGVDLLTREHEVEIAKRIEEGHKTMIASLCRSPIAMRCFIVWYEDLVNEKMLLRDLIDLEANMLHDETPENDEENSSETEGEEHEDNHLSMSRVETQILPNIIERMKKIAFICEELLIEAKKCYEKSFEPKVLQNSKKYNNLELLINEVSEIHFNSKRTEEILGKMYGINRDLINKETAFLKLAEKYGVTRQNFLDEYIGSVINAAWKEKMLKNKKVAWKELMTKESDYIDQMIAELSVIESKTGLLVNDFKKLVNTIQKSERQTLQAKKDMIEANLRLVISIAKKYANRGLQFLDLIQEGNIGLMKAVDKFEYRRGYKFSTYATWWIRQAITRAIADQARTIRIPVHMIETINKILRTSRQMLNELGYEPTATEIANRLSMPLDKVRKVMKIAKEPISLENPVGDDSDGGQLGDFIEDKNAVAPIDAAIQSNLREVTTRVLATLTPREERVLRMRFGIGMNTDHTLEEVGQQFKVTRERIRQIESKALRKLQHPIRSKKLNSFRSGGKRGDGNSSDLLEA.

The interval 177–202 (LHDETPENDEENSSETEGEEHEDNHL) is disordered. Positions 182–197 (PENDEENSSETEGEEH) are enriched in acidic residues. The sigma-70 factor domain-2 stretch occupies residues 385–455 (MIEANLRLVI…TRAIADQART (71 aa)). The Interaction with polymerase core subunit RpoC signature appears at 409 to 412 (DLIQ). Positions 464–541 (ETINKILRTS…DKNAVAPIDA (78 aa)) are sigma-70 factor domain-3. The sigma-70 factor domain-4 stretch occupies residues 554–607 (VLATLTPREERVLRMRFGIGMNTDHTLEEVGQQFKVTRERIRQIESKALRKLQH). Positions 580–599 (LEEVGQQFKVTRERIRQIES) form a DNA-binding region, H-T-H motif. The disordered stretch occupies residues 608-634 (PIRSKKLNSFRSGGKRGDGNSSDLLEA).

Belongs to the sigma-70 factor family. RpoD/SigA subfamily. Interacts transiently with the RNA polymerase catalytic core.

The protein resides in the cytoplasm. Sigma factors are initiation factors that promote the attachment of RNA polymerase to specific initiation sites and are then released. This sigma factor is the primary sigma factor during exponential growth. The polypeptide is RNA polymerase sigma factor RpoD (Rickettsia conorii (strain ATCC VR-613 / Malish 7)).